The following is a 291-amino-acid chain: Kidney mitochondrial carrier protein 1 (291 aa).

Ser-2 carries the post-translational modification N-acetylserine. 3 Solcar repeats span residues 7–96, 104–189, and 198–289; these read KPFV…LKRL, ETLP…TKKH, and DTVY…LKKL. 6 consecutive transmembrane segments (helical) span residues 9–26, 71–89, 105–124, 164–183, 204–224, and 264–283; these read FVYG…TFPI, GIAP…KIGT, TLPI…STIA, GVSL…LPVY, FLSS…VDVV, and GFWP…FVTY.

This sequence belongs to the mitochondrial carrier (TC 2.A.29) family. As to quaternary structure, interacts with VDAC1.

The protein localises to the mitochondrion inner membrane. The enzyme catalyses sulfite(in) + sulfate(out) = sulfite(out) + sulfate(in). It carries out the reaction thiosulfate(in) + sulfate(out) = thiosulfate(out) + sulfate(in). It catalyses the reaction sulfate(out) + phosphate(in) = sulfate(in) + phosphate(out). The catalysed reaction is oxalate(in) + sulfate(out) = oxalate(out) + sulfate(in). The enzyme catalyses malonate(in) + sulfate(out) = malonate(out) + sulfate(in). It carries out the reaction maleate(in) + sulfate(out) = maleate(out) + sulfate(in). It catalyses the reaction (S)-malate(in) + sulfate(out) = (S)-malate(out) + sulfate(in). The catalysed reaction is (3S)-citramalate(in) + sulfate(out) = (3S)-citramalate(out) + sulfate(in). The enzyme catalyses (3R)-citramalate(in) + sulfate(out) = (3R)-citramalate(out) + sulfate(in). It carries out the reaction sulfate(out) + succinate(in) = sulfate(in) + succinate(out). It catalyses the reaction (S,S)-tartrate(in) + sulfate(out) = (S,S)-tartrate(out) + sulfate(in). The catalysed reaction is (2R,3R)-tartrate(in) + sulfate(out) = (2R,3R)-tartrate(out) + sulfate(in). The enzyme catalyses D-aspartate(in) + sulfate(out) = D-aspartate(out) + sulfate(in). It carries out the reaction L-aspartate(in) + sulfate(out) = L-aspartate(out) + sulfate(in). It catalyses the reaction sulfate(in) = sulfate(out). The catalysed reaction is phosphate(in) = phosphate(out). The enzyme catalyses (S)-malate(out) = (S)-malate(in). Increased activity at pH 6.0. sulfate/sulfate exchange activity is inhibited strongly by pyridoxal 5'-phosphate, bathophenanthroline and the organic mercurials mersalyl, p-chloromercuribenzoate and HgCl2. Its function is as follows. Antiporter that transports inorganic anions (sulfate, sulfite, thiosulfate and phosphate) and, to a lesser extent, a variety of dicarboxylates (e.g. malonate, malate and citramalate) and, even more so, aspartate. The sulfate/sulfate exchange is much higher than the phosphate/phosphate and malate/malate exchanges. The transport affinities is higher for sulfate and thiosulfate than for any other substrate. May catalyze the export of sulfite and thiosulfate (the hydrogen sulfide degradation products) from the mitochondria, thereby modulating the level of the hydrogen sulfide. Also may mediate a very low unidirectional transport of sulfate, phosphate and (S)-malate. The polypeptide is Kidney mitochondrial carrier protein 1 (Homo sapiens (Human)).